A 646-amino-acid polypeptide reads, in one-letter code: Protein kinase YegI (646 aa).

In terms of domain architecture, Protein kinase spans 13–300 (VTPGRELGKG…KAWVAALDLL (288 aa)). Residues 19 to 27 (LGKGGEGAV) and Lys-39 each bind ATP. The active-site Proton acceptor is the Asp-141.

In terms of processing, autophosphorylated.

In terms of biological role, probable serine/threonine kinase. This Escherichia coli O157:H7 protein is Protein kinase YegI (yegI).